Reading from the N-terminus, the 1292-residue chain is Sorbin and SH3 domain-containing protein 1 (1292 aa).

4 disordered regions span residues 1 to 29 (MSSECDGGSKAVMNGLAPGSNGQDKATAD), 73 to 158 (LRAS…AQPE), 214 to 275 (HLQR…SSPL), and 318 to 381 (REQQ…MDEV). Over residues 74–89 (RASSSYRETPSSSPAS) the composition is skewed to low complexity. The residue at position 82 (Thr-82) is a Phosphothreonine. 2 positions are modified to phosphoserine: Ser-86 and Ser-89. Residues 93 to 102 (TRQHESKPGL) show a composition bias toward basic and acidic residues. 6 positions are modified to phosphoserine: Glu-105, Leu-114, Val-137, Ser-146, Ser-242, and Ser-259. Polar residues predominate over residues 114–128 (LSSSADANGNAQPSS). A compositionally biased stretch (pro residues) spans 240 to 252 (SFSPPPPLVPPAP). Over residues 266 to 275 (AVSSTDSSPL) the composition is skewed to polar residues. Ser-341 carries the post-translational modification Phosphoserine. Position 344 is a phosphothreonine (Thr-344). A phosphoserine mark is found at Glu-346 and Ser-350. The segment covering 354–365 (AIEKRAKDDSRR) has biased composition (basic and acidic residues). A SoHo domain is found at 366–469 (VVKSTQDLSD…YSPRYSFSED (104 aa)). A phosphoserine mark is found at Ser-369, Ser-374, and Asn-387. The interval 405–534 (LNRDTPEENP…TRKYRAEPKS (130 aa)) is disordered. Residues 437–450 (YTPTYQFPASTPSP) show a composition bias toward polar residues. Ser-452, Ser-465, Asp-469, Ser-472, Arg-478, and Ser-481 each carry phosphoserine. Positions 510–534 (SSERNDWEPPDKKVDTRKYRAEPKS) are enriched in basic and acidic residues. Residue Tyr-536 is modified to Phosphotyrosine; by ABL1. Phosphoserine occurs at positions 556, 603, 609, and 640. The disordered stretch occupies residues 628-650 (APSANVPQSSAISPTPEISSETP). The residue at position 654 (Tyr-654) is a Phosphotyrosine; by ABL1. 2 positions are modified to phosphoserine: Ser-665 and Lys-700. Residues 692 to 716 (PLQGLSGLKRPSSSASTKDSESPRH) form a disordered region. Residue Thr-708 is modified to Phosphothreonine. Phosphoserine is present on residues Ser-713, Ile-730, Asp-735, and Ile-765. The 60-residue stretch at 793-852 (SEMRPARAKFDFKAQTLKELPLQKGDIVYIYKQIDQNWYEGEHHGRVGIFPRTYIELLPP) folds into the SH3 1 domain. At Thr-862 the chain carries Phosphothreonine. The SH3 2 domain occupies 867-928 (LEYGEAIAKF…PITYVDVIKR (62 aa)). Val-923 carries the post-translational modification Phosphoserine. A Phosphotyrosine modification is found at Tyr-937. Low complexity predominate over residues 944–954 (SSPSRSATASP). 4 disordered regions span residues 944–976 (SSPSRSATASPQFSSHSKLITPAPSSLPHSRRA), 1041–1064 (SDRPTPRSVASPLALPSPHKTYSL), 1106–1150 (QLSD…KKSC), and 1162–1230 (TEQR…SQTS). Phosphoserine is present on residues Ser-945 and Ser-953. Positions 955–971 (QFSSHSKLITPAPSSLP) are enriched in polar residues. A compositionally biased stretch (polar residues) spans 1106–1117 (QLSDAFSSQSKR). Basic and acidic residues predominate over residues 1119–1136 (PWREESGQYERKAERGAG). Polar residues predominate over residues 1162–1172 (TEQRLSDLNTP). Basic and acidic residues predominate over residues 1192–1203 (QTERHRGGEQAG). Residues 1211 to 1230 (GSQQPQAQQRRVTPDRSQTS) show a composition bias toward polar residues. At Gln-1213 the chain carries Phosphoserine. One can recognise an SH3 3 domain in the interval 1231 to 1292 (QDLFSYQALY…PGNYVKPLYL (62 aa)). At Tyr-1240 the chain carries Phosphotyrosine; by ABL1.

In terms of assembly, interacts (via third SH3 domain) with the Ten-1 ICD form of TENM1; the interaction induces the translocation of SORBS1 to the nucleus. Interacts with INSM1. Interacts with the long isoform of AFDN and with VCL. AFDN and VCL bind to SORBS1 in a competitive manner and do not form a ternary complex. Interacts with ABL1, CBL, CBLB and INPPL1/SHIP2 through the third SH3 domain. Interaction with ABL1 occurs only after insulin stimulation while this has no effect on the interaction with INPPL1. Interacts with the insulin receptor but dissociates from it following insulin stimulation. Also interacts with SCA7, PTK2/FAK1 and flotillin. Interacts (via SH3 domain 2) with PXN. In terms of processing, O-glycosylated. Detected in skeletal muscle (at protein level). Widely expressed with highest levels in heart and skeletal muscle.

It is found in the cell junction. The protein resides in the adherens junction. It localises to the cell membrane. The protein localises to the cytoplasm. Its subcellular location is the cytoskeleton. It is found in the focal adhesion. The protein resides in the nucleus. It localises to the nucleus matrix. Plays a role in tyrosine phosphorylation of CBL by linking CBL to the insulin receptor. Required for insulin-stimulated glucose transport. Involved in formation of actin stress fibers and focal adhesions. In Homo sapiens (Human), this protein is Sorbin and SH3 domain-containing protein 1.